The primary structure comprises 182 residues: Peptidoglycan-recognition protein SB2 (182 aa).

An N-terminal signal peptide occupies residues 1–17 (MKLQLALVLCGLTLALG). Positions 40–165 (PVRLIIIHHT…CQTKATACPG (126 aa)) constitute an N-acetylmuramoyl-L-alanine amidase domain. His-47 contributes to the Zn(2+) binding site. An intrachain disulfide couples Cys-54 to Cys-60. A glycan (N-linked (GlcNAc...) asparagine) is linked at Asn-149. Residues His-155 and Cys-163 each coordinate Zn(2+).

The protein belongs to the N-acetylmuramoyl-L-alanine amidase 2 family. Zn(2+) is required as a cofactor.

The protein resides in the secreted. The catalysed reaction is Hydrolyzes the link between N-acetylmuramoyl residues and L-amino acid residues in certain cell-wall glycopeptides.. N-acetylmuramyl-L-alanine amidase involved in innate immunity by degrading bacterial peptidoglycans (PGN). Probably plays a scavenger role by digesting biologically active PGN into biologically inactive fragments. Has no direct bacteriolytic activity. The sequence is that of Peptidoglycan-recognition protein SB2 (PGRP-SB2) from Drosophila melanogaster (Fruit fly).